Consider the following 260-residue polypeptide: Indole-3-glycerol phosphate synthase (260 aa).

This sequence belongs to the TrpC family.

It catalyses the reaction 1-(2-carboxyphenylamino)-1-deoxy-D-ribulose 5-phosphate + H(+) = (1S,2R)-1-C-(indol-3-yl)glycerol 3-phosphate + CO2 + H2O. Its pathway is amino-acid biosynthesis; L-tryptophan biosynthesis; L-tryptophan from chorismate: step 4/5. This Thermoanaerobacter pseudethanolicus (strain ATCC 33223 / 39E) (Clostridium thermohydrosulfuricum) protein is Indole-3-glycerol phosphate synthase.